The chain runs to 460 residues: Light-independent protochlorophyllide reductase subunit N (460 aa).

The [4Fe-4S] cluster site is built by cysteine 22, cysteine 47, and cysteine 107.

This sequence belongs to the BchN/ChlN family. In terms of assembly, protochlorophyllide reductase is composed of three subunits; ChlL, ChlN and ChlB. Forms a heterotetramer of two ChlB and two ChlN subunits. It depends on [4Fe-4S] cluster as a cofactor.

The protein localises to the plastid. Its subcellular location is the cyanelle. It carries out the reaction chlorophyllide a + oxidized 2[4Fe-4S]-[ferredoxin] + 2 ADP + 2 phosphate = protochlorophyllide a + reduced 2[4Fe-4S]-[ferredoxin] + 2 ATP + 2 H2O. It functions in the pathway porphyrin-containing compound metabolism; chlorophyll biosynthesis (light-independent). Its function is as follows. Component of the dark-operative protochlorophyllide reductase (DPOR) that uses Mg-ATP and reduced ferredoxin to reduce ring D of protochlorophyllide (Pchlide) to form chlorophyllide a (Chlide). This reaction is light-independent. The NB-protein (ChlN-ChlB) is the catalytic component of the complex. The sequence is that of Light-independent protochlorophyllide reductase subunit N from Cyanophora paradoxa.